We begin with the raw amino-acid sequence, 88 residues long: Cell division topological specificity factor (88 aa).

Belongs to the MinE family.

Functionally, prevents the cell division inhibition by proteins MinC and MinD at internal division sites while permitting inhibition at polar sites. This ensures cell division at the proper site by restricting the formation of a division septum at the midpoint of the long axis of the cell. The polypeptide is Cell division topological specificity factor (Shewanella denitrificans (strain OS217 / ATCC BAA-1090 / DSM 15013)).